The following is a 66-amino-acid chain: Large ribosomal subunit protein bL35 (66 aa).

Belongs to the bacterial ribosomal protein bL35 family.

This chain is Large ribosomal subunit protein bL35, found in Beijerinckia indica subsp. indica (strain ATCC 9039 / DSM 1715 / NCIMB 8712).